The chain runs to 348 residues: Lysophosphatidic acid receptor 2 (348 aa).

Over 1–30 the chain is Extracellular; it reads MGHCYYNETIGFFYNNSGKELSSHWRPKDV. N-linked (GlcNAc...) asparagine glycans are attached at residues asparagine 7 and asparagine 15. Residues 31–51 traverse the membrane as a helical segment; that stretch reads VVVALGLTVSVLVLLTNLLVI. The Cytoplasmic portion of the chain corresponds to 52-66; the sequence is AAIASNRRFHQPIYY. A helical membrane pass occupies residues 67–87; sequence LLGNLAAADLFAGVAYLFLMF. At 88-104 the chain is on the extracellular side; that stretch reads HTGPRTARLSLEGWFLR. A helical transmembrane segment spans residues 105-124; sequence QGLLDTSLTASVATLLAIAV. The Cytoplasmic segment spans residues 125-143; the sequence is ERRRSVMAVQLHSRLPRGR. The helical transmembrane segment at 144–164 threads the bilayer; sequence VVMLIVGVWVAALGLGLLPAH. The Extracellular segment spans residues 165 to 185; it reads SWHCLCALDRCSRMAPLLSRS. A helical membrane pass occupies residues 186–206; that stretch reads YLAVWALSSLLVFLLMVAVYT. Residues 207-239 are Cytoplasmic-facing; that stretch reads RIFFYVRRRVQRMAEHVSCHPRYRETTLSLVKT. Residues 240–260 traverse the membrane as a helical segment; the sequence is VVIILGAFVVCWTPGQVVLLL. At 261–276 the chain is on the extracellular side; the sequence is DGLGCKSCNVLAVEKY. A helical membrane pass occupies residues 277–294; the sequence is FLLLAEANSLVNAAVYSC. Over 295-348 the chain is Cytoplasmic; the sequence is RDAEMRRTFRRLLCCACLRRSTRESAHYTSSAQGGASTRIMLPENGHPLMDSTL. Cysteine 308 carries S-palmitoyl cysteine lipidation. A PDZ-binding motif is present at residues 345–348; that stretch reads DSTL.

This sequence belongs to the G-protein coupled receptor 1 family. As to quaternary structure, interacts with SLC9A3R2/NHERF2, MAGI3 and PLCB3. Interacts with RALA and GRK2.

The protein localises to the cell surface. It localises to the cell membrane. In terms of biological role, receptor for lysophosphatidic acid (LPA), a mediator of diverse cellular activities. Seems to be coupled to the G(i)/G(o), G(12)/G(13), and G(q) families of heteromeric G proteins. Plays a key role in phospholipase C-beta (PLC-beta) signaling pathway. Stimulates phospholipase C (PLC) activity in a manner that is independent of RALA activation. This Macaca fascicularis (Crab-eating macaque) protein is Lysophosphatidic acid receptor 2.